A 347-amino-acid chain; its full sequence is tRNA pseudouridine synthase D (347 aa).

Residue D81 is the Nucleophile of the active site. A TRUD domain is found at 158-304 (GVPNYFGNQR…MRHDRRAIAL (147 aa)).

This sequence belongs to the pseudouridine synthase TruD family.

The catalysed reaction is uridine(13) in tRNA = pseudouridine(13) in tRNA. Responsible for synthesis of pseudouridine from uracil-13 in transfer RNAs. This is tRNA pseudouridine synthase D from Vibrio vulnificus (strain CMCP6).